We begin with the raw amino-acid sequence, 85 residues long: COMM domain-containing protein 6 (85 aa).

Residue M1 is modified to N-acetylmethionine. Positions 18-85 (QLIDFEWKLG…KEIAAIIETV (68 aa)) constitute a COMM domain.

The protein belongs to the COMM domain-containing protein 6 family. As to quaternary structure, component of the commander complex consisting of the CCC subcomplex and the retriever subcomplex. Component of the CCC (COMMD/CCDC22/CCDC93) subcomplex consisting of COMMD1, COMMD2, COMMD3, COMMD4, COMMD5, COMMD6, COMMD7, COMMD8, COMMD9, COMMD10, CCDC22 and CCDC93; within the complex forms a heterodimer with COMMD1. May form a homodimer with isoform 1. Interacts with RELA, RELB, NFKB1/p105. Does not interact with NFKBIB. Interacts with CCDC22, CCDC93, SCNN1B, CUL4A.

The protein resides in the nucleus. The protein localises to the cytoplasm. Its function is as follows. Scaffold protein in the commander complex that is essential for endosomal recycling of transmembrane cargos; the commander complex is composed of the CCC subcomplex and the retriever subcomplex. May modulate activity of cullin-RING E3 ubiquitin ligase (CRL) complexes. Down-regulates activation of NF-kappa-B. Inhibits TNF-induced NFKB1 activation. This Bos taurus (Bovine) protein is COMM domain-containing protein 6 (COMMD6).